Here is a 445-residue protein sequence, read N- to C-terminus: tRNA-2-methylthio-N(6)-dimethylallyladenosine synthase (445 aa).

The MTTase N-terminal domain maps to 13-129; that stretch reads KKLFIKTYGC…LPAMARAGRG (117 aa). [4Fe-4S] cluster contacts are provided by cysteine 22, cysteine 58, cysteine 92, cysteine 163, cysteine 167, and cysteine 170. Positions 149–383 constitute a Radical SAM core domain; the sequence is TRRAPAAFLT…LTSQQKAAQE (235 aa). The TRAM domain maps to 383-445; that stretch reads EGMVGRELGV…PNSLAGVLAA (63 aa).

It belongs to the methylthiotransferase family. MiaB subfamily. As to quaternary structure, monomer. [4Fe-4S] cluster is required as a cofactor.

The protein resides in the cytoplasm. The catalysed reaction is N(6)-dimethylallyladenosine(37) in tRNA + (sulfur carrier)-SH + AH2 + 2 S-adenosyl-L-methionine = 2-methylsulfanyl-N(6)-dimethylallyladenosine(37) in tRNA + (sulfur carrier)-H + 5'-deoxyadenosine + L-methionine + A + S-adenosyl-L-homocysteine + 2 H(+). In terms of biological role, catalyzes the methylthiolation of N6-(dimethylallyl)adenosine (i(6)A), leading to the formation of 2-methylthio-N6-(dimethylallyl)adenosine (ms(2)i(6)A) at position 37 in tRNAs that read codons beginning with uridine. The sequence is that of tRNA-2-methylthio-N(6)-dimethylallyladenosine synthase from Paracoccus denitrificans (strain Pd 1222).